Here is a 247-residue protein sequence, read N- to C-terminus: Uridylate kinase (247 aa).

Position 19–22 (19–22 (KISG)) interacts with ATP. Gly61 lines the UMP pocket. Gly62 and Arg66 together coordinate ATP. UMP-binding positions include Asp81 and 142–149 (TGNPFFTT). ATP-binding residues include Thr169, Gln170, Tyr175, and Asp178.

The protein belongs to the UMP kinase family. As to quaternary structure, homohexamer.

It is found in the cytoplasm. It catalyses the reaction UMP + ATP = UDP + ADP. It participates in pyrimidine metabolism; CTP biosynthesis via de novo pathway; UDP from UMP (UMPK route): step 1/1. Its activity is regulated as follows. Inhibited by UTP. Functionally, catalyzes the reversible phosphorylation of UMP to UDP. The polypeptide is Uridylate kinase (Wolbachia pipientis wMel).